A 100-amino-acid chain; its full sequence is Integration host factor subunit alpha (100 aa).

This sequence belongs to the bacterial histone-like protein family. In terms of assembly, heterodimer of an alpha and a beta chain.

This protein is one of the two subunits of integration host factor, a specific DNA-binding protein that functions in genetic recombination as well as in transcriptional and translational control. This Erythrobacter litoralis (strain HTCC2594) protein is Integration host factor subunit alpha.